Here is a 341-residue protein sequence, read N- to C-terminus: ATPase GET3 (341 aa).

Position 34–41 (34–41 (KGGVGKTT)) interacts with ATP. The active site involves D63. Residues E245 and N272 each coordinate ATP. Zn(2+)-binding residues include C283 and C286.

It belongs to the arsA ATPase family. As to quaternary structure, homodimer.

It is found in the cytoplasm. The protein resides in the endoplasmic reticulum. Its function is as follows. ATPase required for the post-translational delivery of tail-anchored (TA) proteins to the endoplasmic reticulum. Recognizes and selectively binds the transmembrane domain of TA proteins in the cytosol. This complex then targets to the endoplasmic reticulum by membrane-bound receptors, where the tail-anchored protein is released for insertion. This process is regulated by ATP binding and hydrolysis. ATP binding drives the homodimer towards the closed dimer state, facilitating recognition of newly synthesized TA membrane proteins. ATP hydrolysis is required for insertion. Subsequently, the homodimer reverts towards the open dimer state, lowering its affinity for the membrane-bound receptor, and returning it to the cytosol to initiate a new round of targeting. This is ATPase GET3 from Paracoccidioides brasiliensis (strain Pb18).